Consider the following 472-residue polypeptide: 3-isopropylmalate dehydratase large subunit (472 aa).

Positions 353, 414, and 417 each coordinate [4Fe-4S] cluster.

The protein belongs to the aconitase/IPM isomerase family. LeuC type 1 subfamily. Heterodimer of LeuC and LeuD. [4Fe-4S] cluster is required as a cofactor.

The enzyme catalyses (2R,3S)-3-isopropylmalate = (2S)-2-isopropylmalate. It functions in the pathway amino-acid biosynthesis; L-leucine biosynthesis; L-leucine from 3-methyl-2-oxobutanoate: step 2/4. Functionally, catalyzes the isomerization between 2-isopropylmalate and 3-isopropylmalate, via the formation of 2-isopropylmaleate. This chain is 3-isopropylmalate dehydratase large subunit, found in Acinetobacter baumannii (strain ACICU).